The following is a 383-amino-acid chain: Lipid-A-disaccharide synthase (383 aa).

It belongs to the LpxB family.

The catalysed reaction is a lipid X + a UDP-2-N,3-O-bis[(3R)-3-hydroxyacyl]-alpha-D-glucosamine = a lipid A disaccharide + UDP + H(+). Its pathway is bacterial outer membrane biogenesis; LPS lipid A biosynthesis. Its function is as follows. Condensation of UDP-2,3-diacylglucosamine and 2,3-diacylglucosamine-1-phosphate to form lipid A disaccharide, a precursor of lipid A, a phosphorylated glycolipid that anchors the lipopolysaccharide to the outer membrane of the cell. This chain is Lipid-A-disaccharide synthase, found in Syntrophus aciditrophicus (strain SB).